Consider the following 88-residue polypeptide: Small ribosomal subunit protein bS16 (88 aa).

It belongs to the bacterial ribosomal protein bS16 family.

The polypeptide is Small ribosomal subunit protein bS16 (Leptospira borgpetersenii serovar Hardjo-bovis (strain L550)).